Here is a 498-residue protein sequence, read N- to C-terminus: Glycerol kinase (498 aa).

Residue T12 participates in ADP binding. The ATP site is built by T12, T13, and S14. T12 serves as a coordination point for sn-glycerol 3-phosphate. R16 contributes to the ADP binding site. Sn-glycerol 3-phosphate is bound by residues R82, E83, Y134, and D243. Residues R82, E83, Y134, D243, and Q244 each contribute to the glycerol site. Positions 265 and 308 each coordinate ADP. Residues T265, G308, Q312, and G409 each coordinate ATP. Residues G409 and N413 each contribute to the ADP site.

This sequence belongs to the FGGY kinase family. As to quaternary structure, homotetramer and homodimer (in equilibrium).

The enzyme catalyses glycerol + ATP = sn-glycerol 3-phosphate + ADP + H(+). It participates in polyol metabolism; glycerol degradation via glycerol kinase pathway; sn-glycerol 3-phosphate from glycerol: step 1/1. Activated by phosphorylation and inhibited by fructose 1,6-bisphosphate (FBP). Its function is as follows. Key enzyme in the regulation of glycerol uptake and metabolism. Catalyzes the phosphorylation of glycerol to yield sn-glycerol 3-phosphate. The chain is Glycerol kinase from Agathobacter rectalis (strain ATCC 33656 / DSM 3377 / JCM 17463 / KCTC 5835 / VPI 0990) (Eubacterium rectale).